The following is a 509-amino-acid chain: L-aspartate semialdehyde sulfurtransferase (509 aa).

Catalysis depends on C133, which acts as the Cysteine persulfide intermediate. CBS domains are found at residues 394–450 (LSKP…NKKT) and 455–509 (MTRN…GGKK). S-methyl-5'-thioadenosine contacts are provided by S395, I399, and H421. Residues D439, T456, I460, and 479–482 (NISG) each bind S-adenosyl-L-methionine. 497–500 (TSED) provides a ligand contact to S-methyl-5'-thioadenosine.

It belongs to the L-aspartate semialdehyde sulfurtransferase family. Homodimer. May form a complex with MJ0099.

It catalyses the reaction L-aspartate 4-semialdehyde + reduced 2[4Fe-4S]-[ferredoxin] + hydrogen sulfide + 3 H(+) = oxidized 2[4Fe-4S]-[ferredoxin] + L-homocysteine + H2O. It participates in amino-acid biosynthesis. Its activity is regulated as follows. The ligand-induced conformational reorganization of the protein could be an important regulatory mechanism. Its function is as follows. Required for O-acetylhomoserine sulfhydrylase (OAHS)-independent homocysteine (Hcy) biosynthesis. Together with MJ0099, catalyzes the condensation of sulfide with aspartate semialdehyde to generate homocysteine. Likely functions through persulfide intermediate. This Methanocaldococcus jannaschii (strain ATCC 43067 / DSM 2661 / JAL-1 / JCM 10045 / NBRC 100440) (Methanococcus jannaschii) protein is L-aspartate semialdehyde sulfurtransferase.